The sequence spans 137 residues: Ribosomal RNA large subunit methyltransferase H (137 aa).

Residues L56, G85, and L104–F109 contribute to the S-adenosyl-L-methionine site.

Belongs to the RNA methyltransferase RlmH family. Homodimer.

It localises to the cytoplasm. It catalyses the reaction pseudouridine(1915) in 23S rRNA + S-adenosyl-L-methionine = N(3)-methylpseudouridine(1915) in 23S rRNA + S-adenosyl-L-homocysteine + H(+). In terms of biological role, specifically methylates the pseudouridine at position 1915 (m3Psi1915) in 23S rRNA. The polypeptide is Ribosomal RNA large subunit methyltransferase H (Prochlorococcus marinus (strain MIT 9515)).